Reading from the N-terminus, the 638-residue chain is Threonine--tRNA ligase (638 aa).

The 61-residue stretch at 1–61 (MPKITLPDGT…KNDSKVVIIT (61 aa)) folds into the TGS domain. Residues 242–533 (DHRKLGKKHS…LIEQYEAKFP (292 aa)) are catalytic. C333, H384, and H510 together coordinate Zn(2+).

Belongs to the class-II aminoacyl-tRNA synthetase family. Homodimer. Requires Zn(2+) as cofactor.

The protein resides in the cytoplasm. The enzyme catalyses tRNA(Thr) + L-threonine + ATP = L-threonyl-tRNA(Thr) + AMP + diphosphate + H(+). Its function is as follows. Catalyzes the attachment of threonine to tRNA(Thr) in a two-step reaction: L-threonine is first activated by ATP to form Thr-AMP and then transferred to the acceptor end of tRNA(Thr). Also edits incorrectly charged L-seryl-tRNA(Thr). The chain is Threonine--tRNA ligase from Prochlorococcus marinus (strain MIT 9515).